Reading from the N-terminus, the 908-residue chain is MGSNRPKNFRRRGDDGGDEIDGKVATPSSKPTSTLSSSKPKTLSASAPKKKLLSFADDEEEEEDGAPRVTIKPKNGRDRVKSSSRLGVSGSSHRHSSTKERRPASSNVLPQAGSYSKEALLELQKNTRTLPYSRSSANAEPKVVLKGLIKPPQDHEQQSLKDVVKQVSDLDFDEEGEEEQHEDAFADQAAIIRAKKERMRQSRSAPAPDYISLDGGIVNHSAVEGVSDEDADFQGIFVGPRPQKDDKKGVFDFGDENPTAKETTTSSIYEDEDEEDKLWEEEQFKKGIGKRMDEGSHRTVTSNGIGVPLHSKQQTLPQQQPQMYAYHAGTPMPNVSVAPTIGPATSVDTLPMSQQAELAKKALKDNVKKLKESHAKTLSSLTKTDENLTASLMSITALESSLSAAGDKYVFMQKLRDFISVICDFMQNKGSLIEEIEDQMKELNEKHALSILERRIADNNDEMIELGAAVKAAMTVLNKHGSSSSVIAAATGAALAASTSIRQQMNQPVKLDEFGRDENLQKRREVEQRAAARQKRRARFENKRASAMEVDGPSLKIEGESSTDESDTETSAYKETRDSLLQCADKVFSDASEEYSQLSKVKARFERWKRDYSSTYRDAYMSLTVPSIFSPYVRLELLKWDPLHQDVDFFDMKWHGLLFDYGKPEDGDDFAPDDTDANLVPELVEKVAIPILHHQIVRCWDILSTRETRNAVAATSLVTNYVSASSEALAELFAAIRARLVEAIAAISVPTWDPLVLKAVPNTPQVAAYRFGTSVRLMRNICMWKDILALPVLENLALSDLLFGKVLPHVRSIASNIHDAVTRTERIVASLSGVWTGPSVTRTHSRPLQPLVDCTLTLRRILEKRLGSGLDDAETTGLARRLKRILVELHEHDHAREIVRTFNLKEAV.

Disordered regions lie at residues 1–113 (MGSN…PQAG) and 238–277 (VGPR…EEDK). Over residues 25–47 (ATPSSKPTSTLSSSKPKTLSASA) the composition is skewed to low complexity. Residues 426 to 453 (MQNKGSLIEEIEDQMKELNEKHALSILE) adopt a coiled-coil conformation. The segment covering 513–530 (EFGRDENLQKRREVEQRA) has biased composition (basic and acidic residues). A disordered region spans residues 513–574 (EFGRDENLQK…ESDTETSAYK (62 aa)).

It belongs to the GCF family. In terms of assembly, interacts with STIPL1/NTR1.

It is found in the nucleus. Functionally, transcriptional repressor regulating endoreduplication through control of A-type cyclins expression. Does not bind to promoter sequences (in vitro) and may act by interacting with tissue-specific transcription factors. Enhances the endocycle in endoreduplicating cells in seedlings. Required for efficient splicing. This Arabidopsis thaliana (Mouse-ear cress) protein is Transcriptional repressor ILP1.